Here is a 448-residue protein sequence, read N- to C-terminus: Trigger factor (448 aa).

Residues 160–245 form the PPIase FKBP-type domain; it reads GDMLLMKVES…IQEIREEKLP (86 aa).

Belongs to the FKBP-type PPIase family. Tig subfamily.

It localises to the cytoplasm. The catalysed reaction is [protein]-peptidylproline (omega=180) = [protein]-peptidylproline (omega=0). Functionally, involved in protein export. Acts as a chaperone by maintaining the newly synthesized protein in an open conformation. Functions as a peptidyl-prolyl cis-trans isomerase. The protein is Trigger factor of Dehalococcoides mccartyi (strain ATCC BAA-2266 / KCTC 15142 / 195) (Dehalococcoides ethenogenes (strain 195)).